A 472-amino-acid polypeptide reads, in one-letter code: Ribulose bisphosphate carboxylase large chain (472 aa).

Asparagine 120 and threonine 170 together coordinate substrate. Lysine 172 (proton acceptor) is an active-site residue. Residue lysine 174 coordinates substrate. Mg(2+) contacts are provided by lysine 198, aspartate 200, and glutamate 201. Lysine 198 is subject to N6-carboxylysine. Residue histidine 291 is the Proton acceptor of the active site. Positions 292, 324, and 376 each coordinate substrate.

It belongs to the RuBisCO large chain family. Type I subfamily. As to quaternary structure, heterohexadecamer of 8 large chains and 8 small chains. Mg(2+) is required as a cofactor.

It localises to the carboxysome. It catalyses the reaction 2 (2R)-3-phosphoglycerate + 2 H(+) = D-ribulose 1,5-bisphosphate + CO2 + H2O. The catalysed reaction is D-ribulose 1,5-bisphosphate + O2 = 2-phosphoglycolate + (2R)-3-phosphoglycerate + 2 H(+). Its function is as follows. RuBisCO catalyzes two reactions: the carboxylation of D-ribulose 1,5-bisphosphate, the primary event in carbon dioxide fixation, as well as the oxidative fragmentation of the pentose substrate in the photorespiration process. Both reactions occur simultaneously and in competition at the same active site. The sequence is that of Ribulose bisphosphate carboxylase large chain from Gloeothece citriformis (strain PCC 7424) (Cyanothece sp. (strain PCC 7424)).